Consider the following 185-residue polypeptide: Large ribosomal subunit protein uL5 (185 aa).

Belongs to the universal ribosomal protein uL5 family. Part of the 50S ribosomal subunit; part of the 5S rRNA subcomplex. Contacts the 5S rRNA and the P site tRNA. Forms a bridge to the 30S subunit in the 70S ribosome. In terms of processing, both N-terminus methionine truncation and retention have been observed for this protein. May be methylated twice, on undetermined residues.

Functionally, this is one of the proteins that bind and probably mediate the attachment of the 5S RNA into the large ribosomal subunit, where it forms part of the central protuberance. In the 70S ribosome it contacts protein S13 of the 30S subunit (bridge B1b), connecting the 2 subunits; this bridge is implicated in subunit movement. Contacts the P site tRNA; the 5S rRNA and some of its associated proteins might help stabilize positioning of ribosome-bound tRNAs. In Rhodopseudomonas palustris (strain ATCC BAA-98 / CGA009), this protein is Large ribosomal subunit protein uL5.